The sequence spans 401 residues: E3 ubiquitin-protein ligase RGLG4 (401 aa).

The segment at 1–43 (MTMGNFLKRFGSGKSRSSRNMTLGTTSSQSHEPSPSDPSLSLA) is disordered. Low complexity predominate over residues 8–19 (KRFGSGKSRSSR). Over residues 20 to 32 (NMTLGTTSSQSHE) the composition is skewed to polar residues. The region spanning 79–299 (NLILGVDFTK…KETAFALAAL (221 aa)) is the VWFA domain. Positions 326-350 (VPRPPPIPYTPPTNAELPSTASPAS) are disordered. The span at 327–336 (PRPPPIPYTP) shows a compositional bias: pro residues. A compositionally biased stretch (polar residues) spans 341 to 350 (ELPSTASPAS). Residues 357–390 (CPICLTNRKDVAFSCGHMTCGDCGSKISNCPICR) form an RING-type zinc finger.

Interacts with UBC30, GRXS17 and GLB3. Widely expressed.

The protein localises to the cytoplasm. Its subcellular location is the nucleus. The catalysed reaction is S-ubiquitinyl-[E2 ubiquitin-conjugating enzyme]-L-cysteine + [acceptor protein]-L-lysine = [E2 ubiquitin-conjugating enzyme]-L-cysteine + N(6)-ubiquitinyl-[acceptor protein]-L-lysine.. Possesses E3 ubiquitin-protein ligase in vitro. Acts as upstream modulator of jasmonate (JA) signaling in response to various stimuli, such as JA-inhibited root growth, JA-inductive gene expression, coronatine-mediated pathogen susceptibility, wound-stimulated expression of JA-responsive genes and wound-induced JA biosynthesis. Controls fumonisin B1 (FB1)-triggered programmed cell death (PCD) by modulating the JA signaling pathway. May mediate salicylic acid (SA) suppression of JA signaling in FB1-induced responses. May mediate the formation of 'Lys-48'-linked multiubiquitin chains. Mediates the polyubiquitination and subsequent proteasomal degradation of the target protein GRXS17. The polypeptide is E3 ubiquitin-protein ligase RGLG4 (Arabidopsis thaliana (Mouse-ear cress)).